The sequence spans 311 residues: Protease HtpX homolog 1 (311 aa).

2 consecutive transmembrane segments (helical) span residues 12 to 32 (IIAL…IINF) and 35 to 55 (FPVI…WLIS). H137 is a binding site for Zn(2+). Residue E138 is part of the active site. Zn(2+) is bound at residue H141. 2 helical membrane passes run 159 to 179 (ILGF…IFAV) and 184 to 204 (ILVG…TFFL). E216 is a Zn(2+) binding site.

It belongs to the peptidase M48B family. Zn(2+) serves as cofactor.

Its subcellular location is the cell membrane. The protein is Protease HtpX homolog 1 of Sulfurisphaera tokodaii (strain DSM 16993 / JCM 10545 / NBRC 100140 / 7) (Sulfolobus tokodaii).